Here is a 134-residue protein sequence, read N- to C-terminus: Fluoride-specific ion channel FluC 2 (134 aa).

A run of 4 helical transmembrane segments spans residues 10–30, 43–63, 67–87, and 100–120; these read LSAELQELVLVALGAVPGALL, LLVNVLGAALLGLLAGLPAAP, LLVGIGFCGSLTTFSSWMVDA, and FGLIGLTLGLGVGAAALGFWL. 2 residues coordinate Na(+): G75 and T78.

It belongs to the fluoride channel Fluc/FEX (TC 1.A.43) family.

It localises to the cell inner membrane. It carries out the reaction fluoride(in) = fluoride(out). Its activity is regulated as follows. Na(+) is not transported, but it plays an essential structural role and its presence is essential for fluoride channel function. Functionally, fluoride-specific ion channel. Important for reducing fluoride concentration in the cell, thus reducing its toxicity. This is Fluoride-specific ion channel FluC 2 from Synechococcus sp. (strain CC9902).